We begin with the raw amino-acid sequence, 451 residues long: MPPLDTIAAVATAVAPGQGGIAVIRLSGPVAEQVAQAVVQCPGHQEWGSHRILYGHVMAVDGQRRLDEVLLLLMRAPRSFTGEDVVEIHCHGGVMAVQQVLERVLEHPGVRRALPGEFSQRAVLNGRLDLTQAEAVSELVSARSRRAADLAMAGLDGGIQARITVLRERLLDQLTELEARVDFEDDLPPLDGTALLNELQAVRVELLALVADGERGDALRHGLRVALVGRPNVGKSSLLNRLSRRERAIVTELPGTTRDLLESEIVLDGVPITLMDTAGIRATNDAVEQLGIARSEEALISADVVVLIVDGHAGWTETDAQLLARIPNDVPRVVVANKSDLDGPPLPGLVDVQFSALNGAGEDAFVQVLLERCGAGDAAGIVLSLNTRQRDLASVAAAALERSHEVAQQQLPWDFWTIDLREAIRGLGEITGEELTEAVLERVFSRFCIGK.

(6S)-5-formyl-5,6,7,8-tetrahydrofolate-binding residues include arginine 25, glutamate 87, and arginine 127. Residues glycine 222–glycine 374 form the TrmE-type G domain. Asparagine 232 is a K(+) binding site. GTP is bound by residues asparagine 232–serine 237, threonine 251–threonine 257, and aspartate 276–glycine 279. Serine 236 is a Mg(2+) binding site. Residues threonine 251, leucine 253, and threonine 256 each contribute to the K(+) site. Residue threonine 257 participates in Mg(2+) binding. Position 451 (lysine 451) interacts with (6S)-5-formyl-5,6,7,8-tetrahydrofolate.

This sequence belongs to the TRAFAC class TrmE-Era-EngA-EngB-Septin-like GTPase superfamily. TrmE GTPase family. In terms of assembly, homodimer. Heterotetramer of two MnmE and two MnmG subunits. K(+) is required as a cofactor.

It is found in the cytoplasm. Exhibits a very high intrinsic GTPase hydrolysis rate. Involved in the addition of a carboxymethylaminomethyl (cmnm) group at the wobble position (U34) of certain tRNAs, forming tRNA-cmnm(5)s(2)U34. The protein is tRNA modification GTPase MnmE of Synechococcus sp. (strain CC9902).